The primary structure comprises 637 residues: MTEYVAGKYDVIVIGAGHAGCEAALASARLGAKTLILTISWDNVALMPCNPAIGGPAKGHLVREIDALGGQMGLTIDKTCIQIRLLNTGKGPAVHALRAQADKKRYQREMIRVLEHQENLDVRQAMVESVVVEQGRVRGIRTNTGAFFAAPALVITTGTYLRGRIIIGDLHYPGGPNGYFPSVALAASLRDIGVRLGRFKTGTPARVDGRTVDFSQMVEQPGDREPLNFSFLSPRIERKQISCWLTYTTEETHQIIRDNLHRSPLYAGVIEGTGPRYCPSIEDKVVRFADKKSHQVFIEPEGEGTHEMYVQGMSTSLPEDVQVTMLRSIIGMKDVKIIRPGYAIEYDYVDPTQLRLSLEHQEIGGLFTAGQINGTSGYEEAAAQGLMAGINAARFVKGEEPLVLKRSDAYIGVLIDDLVTKGTNEPYRMLTSRAEYRLLLRQDNADQRLTEIGRSIGLVDDRRYRRFREKMQLLEQEVVRWKSSFVTPGNKKIQAILDEKKSAPLTKGVSLYDLLRRPELTYDDLIPLCNDGEKDLPIDPEVAEQVEISAKFEGYLVKQQAQVDRFNKLENKRLPADLDYKRVHGLSNEGRQKLIARKPVSIGQASRISGVSPADISILLVYLEQQRRLAPGEGGVD.

Residues 15 to 20 (GAGHAG), valine 127, and serine 182 each bind FAD. 274 to 288 (GPRYCPSIEDKVVRF) contributes to the NAD(+) binding site. FAD is bound at residue glutamine 371.

Belongs to the MnmG family. In terms of assembly, homodimer. Heterotetramer of two MnmE and two MnmG subunits. The cofactor is FAD.

The protein resides in the cytoplasm. NAD-binding protein involved in the addition of a carboxymethylaminomethyl (cmnm) group at the wobble position (U34) of certain tRNAs, forming tRNA-cmnm(5)s(2)U34. This chain is tRNA uridine 5-carboxymethylaminomethyl modification enzyme MnmG, found in Heliobacterium modesticaldum (strain ATCC 51547 / Ice1).